Consider the following 367-residue polypeptide: Cystinosin (367 aa).

Residues 1-22 form the signal peptide; that stretch reads MIRNWLTIFILFPLKLVEKCES. The Lumenal segment spans residues 23-125; that stretch reads SVSLTVPPVV…LVIRSSAISI (103 aa). N-linked (GlcNAc...) (high mannose) asparagine glycans are attached at residues Asn36, Asn41, and Asn51. An N-linked (GlcNAc...) asparagine glycan is attached at Asn66. Asn84, Asn104, and Asn107 each carry an N-linked (GlcNAc...) (high mannose) asparagine glycan. Residues 123 to 189 enclose the PQ-loop 1 domain; it reads ISIINQVIGW…LLWVPYIKEQ (67 aa). Residues 126–150 form a helical membrane-spanning segment; sequence INQVIGWIYFVAWSISFYPQVIMNW. Residues 151-159 lie on the Cytoplasmic side of the membrane; it reads RRKSVIGLS. A helical membrane pass occupies residues 160 to 179; that stretch reads FDFVALNLTGFVAYSVFNIG. An L-cystine-binding site is contributed by Asn166. Over 180-202 the chain is Lumenal; it reads LLWVPYIKEQFLLKYPNGVNPVN. The helical transmembrane segment at 203 to 225 threads the bilayer; it reads SNDVFFSLHAVVLTLIIIVQCCL. Asp205 serves as a coordination point for H(+). Residues 226–234 lie on the Cytoplasmic side of the membrane; the sequence is YERGGQRVS. Residues 235–257 traverse the membrane as a helical segment; sequence WPAIGFLVLAWLFAFVTMIVAAV. Topologically, residues 258-263 are lumenal; it reads GVTTWL. Residues 263–328 enclose the PQ-loop 2 domain; that stretch reads LQFLFCFSYI…QSYNNDQWTL (66 aa). Residues 264–289 form a helical membrane-spanning segment; sequence QFLFCFSYIKLAVTLVKYFPQAYMNF. L-cystine-binding residues include Lys273, Lys280, and Tyr281. Over 290 to 298 the chain is Cytoplasmic; the sequence is YYKSTEGWS. A helical membrane pass occupies residues 299–308; that stretch reads IGNVLLDFTG. L-cystine-binding residues include Asn301 and Asp305. Asp305 is a binding site for H(+). The Lumenal portion of the chain corresponds to 309-331; sequence GSFSLLQMFLQSYNNDQWTLIFG. A helical transmembrane segment spans residues 332-354; the sequence is DPTKFGLGVFSIVFDVVFFIQHF. Position 346 (Asp346) interacts with H(+). The Cytoplasmic portion of the chain corresponds to 355-367; the sequence is CLYRKRPGYDQLN. The Lysosomal targeting motif signature appears at 362–366; sequence GYDQL.

This sequence belongs to the cystinosin family. In terms of assembly, interacts with components of the V-ATPase complex. Interacts with components of the Ragulator complex. Interacts with RRAGA/RagA and RRAGC/RagC. Interacts with AP-3 complex subunit mu (AP3M1 or AP3M2). As to expression, strongly expressed in pancreas, kidney (adult and fetal), skeletal muscle, melanocytes and keratinocytes. Expressed at lower levels in placenta and heart. Weakly expressed in lung, liver and brain (adult and fetal). In terms of tissue distribution, represents 5-20 % of CTNS transcripts, with the exception of the testis that expresses both isoforms in equal proportions.

The protein localises to the lysosome membrane. It localises to the melanosome membrane. It is found in the cell membrane. It catalyses the reaction L-cystine(out) + H(+)(out) = L-cystine(in) + H(+)(in). With respect to regulation, switches between a lumen- and a cytosol-open conformation: pH induces conformational changes and shifts the equilibrium to facilitate the transition between the lumen- and cytosol-open conformation, thereby promoting cystine transport. Protonation of specific aspartate residues (Asp-205, Asp-305 and Asp-346) favors the cytosol-open conformation. Its function is as follows. Cystine/H(+) symporter that mediates export of cystine, the oxidized dimer of cysteine, from lysosomes. Plays an important role in melanin synthesis by catalyzing cystine export from melanosomes, possibly by inhibiting pheomelanin synthesis. In addition to cystine export, also acts as a positive regulator of mTORC1 signaling in kidney proximal tubular cells, via interactions with components of the v-ATPase and Ragulator complexes. Also involved in small GTPase-regulated vesicle trafficking and lysosomal localization of LAMP2A, independently of cystine transporter activity. The polypeptide is Cystinosin (Homo sapiens (Human)).